The primary structure comprises 302 residues: HTH-type transcriptional regulator AbgR (302 aa).

Residues 5–62 (VKIHQIRAFVEVARQGSIRGASRMLNMSQPALSKSIQELEEGLAAQLFFRRSKGVTLT) form the HTH lysR-type domain. The H-T-H motif DNA-binding region spans 22-41 (IRGASRMLNMSQPALSKSIQ).

It belongs to the LysR transcriptional regulatory family.

In terms of biological role, could be the regulator of the abg operon. The chain is HTH-type transcriptional regulator AbgR (abgR) from Escherichia coli (strain K12).